The chain runs to 94 residues: Cytochrome b-c1 complex subunit 8, mitochondrial (94 aa).

At 2–49 (GPPSGKTYMGWWGHMGGPKQKGITSYAVSPYAQKPLQGIFHNAVFNSF) the chain is on the mitochondrial matrix side. Residues 50-80 (RRFKSQFLYVLIPAGIYWYWWKNGNEYNEFL) form a helical membrane-spanning segment. Residues 81 to 94 (YSKAGREELERVNV) are Mitochondrial intermembrane-facing.

This sequence belongs to the UQCRQ/QCR8 family. In terms of assembly, component of the ubiquinol-cytochrome c oxidoreductase (cytochrome b-c1 complex, complex III, CIII), a multisubunit enzyme composed of 10 subunits. The complex is composed of 3 respiratory subunits cytochrome b (COB), cytochrome c1 (CYT1) and Rieske protein (RIP1), 2 core protein subunits COR1 and QCR2, and 5 low-molecular weight protein subunits QCR6, QCR7, QCR8, QCR9 and QCR10. The complex exists as an obligatory dimer and forms supercomplexes (SCs) in the inner mitochondrial membrane with a monomer or a dimer of cytochrome c oxidase (complex IV, CIV), resulting in 2 different assemblies (supercomplexes III(2)IV and III(2)IV(2)).

The protein resides in the mitochondrion inner membrane. In terms of biological role, component of the ubiquinol-cytochrome c oxidoreductase, a multisubunit transmembrane complex that is part of the mitochondrial electron transport chain which drives oxidative phosphorylation. The respiratory chain contains 3 multisubunit complexes succinate dehydrogenase (complex II, CII), ubiquinol-cytochrome c oxidoreductase (cytochrome b-c1 complex, complex III, CIII) and cytochrome c oxidase (complex IV, CIV), that cooperate to transfer electrons derived from NADH and succinate to molecular oxygen, creating an electrochemical gradient over the inner membrane that drives transmembrane transport and the ATP synthase. The cytochrome b-c1 complex catalyzes electron transfer from ubiquinol to cytochrome c, linking this redox reaction to translocation of protons across the mitochondrial inner membrane, with protons being carried across the membrane as hydrogens on the quinol. In the process called Q cycle, 2 protons are consumed from the matrix, 4 protons are released into the intermembrane space and 2 electrons are passed to cytochrome c. In Saccharomyces cerevisiae (strain ATCC 204508 / S288c) (Baker's yeast), this protein is Cytochrome b-c1 complex subunit 8, mitochondrial (QCR8).